A 202-amino-acid polypeptide reads, in one-letter code: Dephospho-CoA kinase (202 aa).

Positions 5–202 (IVGLTGGIAS…DADYRARANP (198 aa)) constitute a DPCK domain. An ATP-binding site is contributed by 13–18 (ASGKSA).

It belongs to the CoaE family.

It localises to the cytoplasm. It carries out the reaction 3'-dephospho-CoA + ATP = ADP + CoA + H(+). The protein operates within cofactor biosynthesis; coenzyme A biosynthesis; CoA from (R)-pantothenate: step 5/5. In terms of biological role, catalyzes the phosphorylation of the 3'-hydroxyl group of dephosphocoenzyme A to form coenzyme A. The chain is Dephospho-CoA kinase from Xanthomonas axonopodis pv. citri (strain 306).